Consider the following 151-residue polypeptide: Small ribosomal subunit protein uS15 (151 aa).

A compositionally biased stretch (basic residues) spans 1-11 (MPHRSRHKKGR). The disordered stretch occupies residues 1–24 (MPHRSRHKKGRSSSVRPPHPTVPT).

Belongs to the universal ribosomal protein uS15 family. As to quaternary structure, part of the 30S ribosomal subunit.

This chain is Small ribosomal subunit protein uS15, found in Pyrobaculum calidifontis (strain DSM 21063 / JCM 11548 / VA1).